The sequence spans 449 residues: N-succinylarginine dihydrolase (449 aa).

Substrate is bound by residues 19–28 (GGLSYGNVAS), Asn110, and 137–138 (HR). The segment at 23–43 (YGNVASQSNSQQGSNPREAAR) is disordered. Positions 25 to 37 (NVASQSNSQQGSN) are enriched in polar residues. Glu174 is an active-site residue. Position 214 (Arg214) interacts with substrate. The active site involves His250. Asp252 and Asn365 together coordinate substrate. Cys371 (nucleophile) is an active-site residue.

Belongs to the succinylarginine dihydrolase family. In terms of assembly, homodimer.

It catalyses the reaction N(2)-succinyl-L-arginine + 2 H2O + 2 H(+) = N(2)-succinyl-L-ornithine + 2 NH4(+) + CO2. Its pathway is amino-acid degradation; L-arginine degradation via AST pathway; L-glutamate and succinate from L-arginine: step 2/5. Its function is as follows. Catalyzes the hydrolysis of N(2)-succinylarginine into N(2)-succinylornithine, ammonia and CO(2). This is N-succinylarginine dihydrolase from Pseudomonas putida (strain GB-1).